We begin with the raw amino-acid sequence, 153 residues long: uncharacterized protein (153 aa).

Positions 1 to 19 (MKACLLLFFYFSFICQLHG) are cleaved as a signal peptide.

This is an uncharacterized protein from Escherichia coli (strain K12).